We begin with the raw amino-acid sequence, 402 residues long: Putative F-box protein At3g23960 (402 aa).

The disordered stretch occupies residues 1 to 23; it reads MRSRQLHNVSEDRETLSRRNKRS. One can recognise an F-box domain in the interval 26–73; sequence SLNGHIPIDLLIEIFLKLPVKSIATCRSVSKFWTYVLGRQDFTELFLT.

This chain is Putative F-box protein At3g23960, found in Arabidopsis thaliana (Mouse-ear cress).